The following is a 111-amino-acid chain: Large ribosomal subunit protein uL22 (111 aa).

It belongs to the universal ribosomal protein uL22 family. In terms of assembly, part of the 50S ribosomal subunit.

This protein binds specifically to 23S rRNA; its binding is stimulated by other ribosomal proteins, e.g. L4, L17, and L20. It is important during the early stages of 50S assembly. It makes multiple contacts with different domains of the 23S rRNA in the assembled 50S subunit and ribosome. Its function is as follows. The globular domain of the protein is located near the polypeptide exit tunnel on the outside of the subunit, while an extended beta-hairpin is found that lines the wall of the exit tunnel in the center of the 70S ribosome. The polypeptide is Large ribosomal subunit protein uL22 (Chlamydia muridarum (strain MoPn / Nigg)).